The sequence spans 506 residues: 2,3-bisphosphoglycerate-independent phosphoglycerate mutase (506 aa).

2 residues coordinate Mn(2+): D13 and S63. S63 functions as the Phosphoserine intermediate in the catalytic mechanism. Substrate is bound by residues H124, 153–154 (RD), R183, R189, 254–257 (RADR), and K330. Residues D396, H400, D437, H438, and H456 each coordinate Mn(2+).

Belongs to the BPG-independent phosphoglycerate mutase family. As to quaternary structure, monomer. Requires Mn(2+) as cofactor.

The catalysed reaction is (2R)-2-phosphoglycerate = (2R)-3-phosphoglycerate. It participates in carbohydrate degradation; glycolysis; pyruvate from D-glyceraldehyde 3-phosphate: step 3/5. In terms of biological role, catalyzes the interconversion of 2-phosphoglycerate and 3-phosphoglycerate. This chain is 2,3-bisphosphoglycerate-independent phosphoglycerate mutase, found in Cereibacter sphaeroides (strain ATCC 17025 / ATH 2.4.3) (Rhodobacter sphaeroides).